The sequence spans 130 residues: MVRISVLNDALKSMYNAEKRGKRQVMIRPSSKVIIKFLIVMQKHGYIGEFEYVDDHRSGKIVVELNGRLNKCGVISPRFDVGVKEIEGWTARLLPSRQFGYIVLTTSAGIMDHEEARRKNVGGKVLGFFY.

Belongs to the universal ribosomal protein uS8 family.

The protein localises to the cytoplasm. The protein is Small ribosomal subunit protein uS8z/uS8w (RPS15AA) of Arabidopsis thaliana (Mouse-ear cress).